Here is a 209-residue protein sequence, read N- to C-terminus: MIAIIDYGMGNIRSVEQALKYIGTEYIITDDKKEILRSDGVILPGVGTFPKAMGVLEEKDLVCVLKEVGSLGKPLLGICLGMQLLFEKSEELQNCNGLNLLPGVIRKLKVPYKIPHMGWNELKKEGEISLWNGVEDGSFVYYVHSYYADCPNEIVYGASEYGVKVPGFVAKGNIFGAQFHPEKSGEIGMRMLKNFKGVVEAWKSSQLSI.

A Glutamine amidotransferase type-1 domain is found at 1 to 205 (MIAIIDYGMG…KGVVEAWKSS (205 aa)). Catalysis depends on Cys79, which acts as the Nucleophile. Active-site residues include His180 and Glu182.

As to quaternary structure, heterodimer of HisH and HisF.

The protein resides in the cytoplasm. The catalysed reaction is 5-[(5-phospho-1-deoxy-D-ribulos-1-ylimino)methylamino]-1-(5-phospho-beta-D-ribosyl)imidazole-4-carboxamide + L-glutamine = D-erythro-1-(imidazol-4-yl)glycerol 3-phosphate + 5-amino-1-(5-phospho-beta-D-ribosyl)imidazole-4-carboxamide + L-glutamate + H(+). It catalyses the reaction L-glutamine + H2O = L-glutamate + NH4(+). It functions in the pathway amino-acid biosynthesis; L-histidine biosynthesis; L-histidine from 5-phospho-alpha-D-ribose 1-diphosphate: step 5/9. Its function is as follows. IGPS catalyzes the conversion of PRFAR and glutamine to IGP, AICAR and glutamate. The HisH subunit catalyzes the hydrolysis of glutamine to glutamate and ammonia as part of the synthesis of IGP and AICAR. The resulting ammonia molecule is channeled to the active site of HisF. The chain is Imidazole glycerol phosphate synthase subunit HisH from Bacillus mycoides (strain KBAB4) (Bacillus weihenstephanensis).